Here is a 141-residue protein sequence, read N- to C-terminus: Large-conductance mechanosensitive channel (141 aa).

2 helical membrane passes run 16–36 (VIDLAVGVIIGAAFGKIVDSL) and 86–106 (GNFITVAVNFLILAFIVFLMV).

It belongs to the MscL family. Homopentamer.

It localises to the cell inner membrane. Channel that opens in response to stretch forces in the membrane lipid bilayer. May participate in the regulation of osmotic pressure changes within the cell. The polypeptide is Large-conductance mechanosensitive channel (Ralstonia nicotianae (strain ATCC BAA-1114 / GMI1000) (Ralstonia solanacearum)).